The following is a 143-amino-acid chain: Transmembrane protein 80 (143 aa).

4 helical membrane passes run 21 to 41, 55 to 75, 99 to 119, and 121 to 141; these read MLFY…LLMI, LVLD…RLYL, ALLS…DWAL, and ATLL…IAAF.

It localises to the membrane. The protein localises to the cell projection. It is found in the cilium. In Homo sapiens (Human), this protein is Transmembrane protein 80.